A 363-amino-acid chain; its full sequence is Lipoyl synthase (363 aa).

Positions 55, 60, 66, 81, 85, 88, and 292 each coordinate [4Fe-4S] cluster. In terms of domain architecture, Radical SAM core spans tryptophan 67–glycine 281. The segment at proline 338–arginine 363 is disordered. Residues proline 352 to arginine 363 are compositionally biased toward polar residues.

It belongs to the radical SAM superfamily. Lipoyl synthase family. It depends on [4Fe-4S] cluster as a cofactor.

It localises to the cytoplasm. It catalyses the reaction [[Fe-S] cluster scaffold protein carrying a second [4Fe-4S](2+) cluster] + N(6)-octanoyl-L-lysyl-[protein] + 2 oxidized [2Fe-2S]-[ferredoxin] + 2 S-adenosyl-L-methionine + 4 H(+) = [[Fe-S] cluster scaffold protein] + N(6)-[(R)-dihydrolipoyl]-L-lysyl-[protein] + 4 Fe(3+) + 2 hydrogen sulfide + 2 5'-deoxyadenosine + 2 L-methionine + 2 reduced [2Fe-2S]-[ferredoxin]. The protein operates within protein modification; protein lipoylation via endogenous pathway; protein N(6)-(lipoyl)lysine from octanoyl-[acyl-carrier-protein]: step 2/2. Its function is as follows. Catalyzes the radical-mediated insertion of two sulfur atoms into the C-6 and C-8 positions of the octanoyl moiety bound to the lipoyl domains of lipoate-dependent enzymes, thereby converting the octanoylated domains into lipoylated derivatives. The chain is Lipoyl synthase from Corynebacterium aurimucosum (strain ATCC 700975 / DSM 44827 / CIP 107346 / CN-1) (Corynebacterium nigricans).